A 145-amino-acid polypeptide reads, in one-letter code: Large ribosomal subunit protein mL59 (145 aa).

The span at 123-135 (LKKTSKFKNERQK) shows a compositional bias: basic and acidic residues. The segment at 123 to 145 (LKKTSKFKNERQKASKIAKPSPF) is disordered.

It belongs to the mitochondrion-specific ribosomal protein mL59 family. Component of the mitochondrial large ribosomal subunit (mt-LSU). Mature yeast 74S mitochondrial ribosomes consist of a small (37S) and a large (54S) subunit. The 37S small subunit contains a 15S ribosomal RNA (15S mt-rRNA) and at least 32 different proteins. The 54S large subunit contains a 21S rRNA (21S mt-rRNA) and at least 45 different proteins.

Its subcellular location is the mitochondrion. Its function is as follows. Component of the mitochondrial ribosome (mitoribosome), a dedicated translation machinery responsible for the synthesis of mitochondrial genome-encoded proteins, including at least some of the essential transmembrane subunits of the mitochondrial respiratory chain. The mitoribosomes are attached to the mitochondrial inner membrane and translation products are cotranslationally integrated into the membrane. The protein is Large ribosomal subunit protein mL59 (mrpl25) of Schizosaccharomyces pombe (strain 972 / ATCC 24843) (Fission yeast).